The chain runs to 186 residues: Large ribosomal subunit protein uL5 (186 aa).

Belongs to the universal ribosomal protein uL5 family. Part of the 50S ribosomal subunit; part of the 5S rRNA/L5/L18/L25 subcomplex. Contacts the 5S rRNA and the P site tRNA. Forms a bridge to the 30S subunit in the 70S ribosome.

Functionally, this is one of the proteins that bind and probably mediate the attachment of the 5S RNA into the large ribosomal subunit, where it forms part of the central protuberance. In the 70S ribosome it contacts protein S13 of the 30S subunit (bridge B1b), connecting the 2 subunits; this bridge is implicated in subunit movement. Contacts the P site tRNA; the 5S rRNA and some of its associated proteins might help stabilize positioning of ribosome-bound tRNAs. This Jannaschia sp. (strain CCS1) protein is Large ribosomal subunit protein uL5.